A 264-amino-acid polypeptide reads, in one-letter code: TLC domain-containing protein 4-B (264 aa).

Transmembrane regions (helical) follow at residues 6–26, 50–70, 84–104, 110–130, 169–189, and 210–230; these read VYVV…VSPV, LVST…LWYD, LVKL…LLLA, MGDV…GYVL, LVVA…IAVM, and LAIQ…NIIW. Positions 41-243 constitute a TLC domain; sequence NKLNDWNSRL…IARGCYKVIT (203 aa).

Belongs to the TLCD4 family.

Its subcellular location is the membrane. This chain is TLC domain-containing protein 4-B (tlcd4b), found in Danio rerio (Zebrafish).